The following is a 318-amino-acid chain: NADH-ubiquinone oxidoreductase chain 1 (318 aa).

The next 8 helical transmembrane spans lie at 2-22, 68-88, 100-120, 146-166, 171-191, 222-242, 253-273, and 293-313; these read FMIN…FLTL, ISMF…MWTP, LGIL…LWSG, LAII…PTLI, HIWL…STLA, LFFL…TILF, ELYT…FLWV, and FLPL…ITAG.

This sequence belongs to the complex I subunit 1 family. As to quaternary structure, core subunit of respiratory chain NADH dehydrogenase (Complex I) which is composed of 45 different subunits.

Its subcellular location is the mitochondrion inner membrane. The catalysed reaction is a ubiquinone + NADH + 5 H(+)(in) = a ubiquinol + NAD(+) + 4 H(+)(out). Functionally, core subunit of the mitochondrial membrane respiratory chain NADH dehydrogenase (Complex I) which catalyzes electron transfer from NADH through the respiratory chain, using ubiquinone as an electron acceptor. Essential for the catalytic activity and assembly of complex I. The polypeptide is NADH-ubiquinone oxidoreductase chain 1 (MT-ND1) (Hipposideros armiger terasensis (Formosan leaf-nosed bat)).